Reading from the N-terminus, the 506-residue chain is Maturase K (506 aa).

It belongs to the intron maturase 2 family. MatK subfamily.

It localises to the plastid. The protein resides in the chloroplast. Functionally, usually encoded in the trnK tRNA gene intron. Probably assists in splicing its own and other chloroplast group II introns. The polypeptide is Maturase K (Jurinea cyanoides).